Consider the following 105-residue polypeptide: Chloroacetanilide N-alkylformylase 2, ferredoxin component (105 aa).

The 2Fe-2S ferredoxin-type domain occupies 2 to 105; the sequence is PKLVVVTREG…GLTVTIAPED (104 aa). Residues cysteine 40, cysteine 46, cysteine 49, and cysteine 86 each contribute to the [2Fe-2S] cluster site.

It belongs to the adrenodoxin/putidaredoxin family. In terms of assembly, the chloroacetanilide N-alkylformylase multicomponent enzyme system is composed of an oxygenase component (CndA) and an electron transfer component formed by a ferredoxin reductase (CndC1) and a ferredoxin (CndB1). In vitro, chloroacetanilide N-alkylformylase assays in which CndB1 is substituted for CndB2 demonstrate that the two enzymes possess nearly identical activities. It depends on [2Fe-2S] cluster as a cofactor.

Functionally, component of the chloroacetanilide N-alkylformylase multicomponent enzyme system involved in the degradation of chloroacetanilide herbicides (N-alkoxyalkyl-N-chloroacetyl-substituted aniline derivatives). In vitro, functions as an intermediate electron transfer protein. This chain is Chloroacetanilide N-alkylformylase 2, ferredoxin component, found in Rhizorhabdus wittichii (strain DC-6 / KACC 16600) (Sphingomonas wittichii).